We begin with the raw amino-acid sequence, 364 residues long: Fructose-1,6-bisphosphatase class 1 3 (364 aa).

4 residues coordinate Mg(2+): E101, D123, L125, and D126. Substrate-binding positions include 126-129 and N218; that span reads DGSS. Residue E290 coordinates Mg(2+).

This sequence belongs to the FBPase class 1 family. Homotetramer. Mg(2+) is required as a cofactor.

The protein localises to the cytoplasm. It carries out the reaction beta-D-fructose 1,6-bisphosphate + H2O = beta-D-fructose 6-phosphate + phosphate. Its pathway is carbohydrate biosynthesis; gluconeogenesis. The chain is Fructose-1,6-bisphosphatase class 1 3 from Cupriavidus necator (strain ATCC 17699 / DSM 428 / KCTC 22496 / NCIMB 10442 / H16 / Stanier 337) (Ralstonia eutropha).